The following is a 714-amino-acid chain: NCK-interacting protein with SH3 domain (714 aa).

The SH3 domain maps to 1-58; that stretch reads MYRALYAFRSAEPNAMAFAAGETFLVLERSSTHWWLAARARSGETGYVPPAYLHRLQG. Disordered regions lie at residues 103–126 and 139–298; these read TLSRRGTSASSATVMTPSTSDHHL and RTGF…AAET. A compositionally biased stretch (polar residues) spans 106–121; it reads RRGTSASSATVMTPST. A Phosphoserine modification is found at serine 120. The short motif at 168 to 185 is the Nuclear localization signal element; sequence RRAAPTTPPPPVKRRDRE. Position 174 is a phosphothreonine (threonine 174). Low complexity predominate over residues 200–215; that stretch reads SGGSSVSSGSSASSTS. The segment covering 216–226 has biased composition (polar residues); it reads MDTLYTGSSPS. Positions 252-263 are enriched in pro residues; that stretch reads QPSPSKAPSPEP. Phosphoserine occurs at positions 260, 286, and 673.

Associates with the intermediate filaments, vimentin and desmin. Binds the first and third SH3 domains of NCK. Binds the proline-rich domains of N-WASP through its SH3 domain. Similarly, binds diaphanous protein homolog 1 (DRF1). Binds the SH3 domains of GRB2 through its proline-rich domains. Interacts with FASLG.

The protein resides in the nucleus. Its function is as follows. Has an important role in stress fiber formation induced by active diaphanous protein homolog 1 (DRF1). Induces microspike formation, in vivo. In vitro, stimulates N-WASP-induced ARP2/3 complex activation in the absence of CDC42. May play an important role in the maintenance of sarcomere and/or in the assembly of myofibrils into sarcomeres. Implicated in regulation of actin polymerization and cell adhesion. The sequence is that of NCK-interacting protein with SH3 domain (Nckipsd) from Mus musculus (Mouse).